Reading from the N-terminus, the 151-residue chain is FAD synthase (151 aa).

ATP-binding positions include 12–13 (TF), 17–20 (HPGH), D97, and Y125.

Belongs to the archaeal FAD synthase family. In terms of assembly, homodimer. Requires a divalent metal cation as cofactor.

The enzyme catalyses FMN + ATP + H(+) = FAD + diphosphate. It participates in cofactor biosynthesis; FAD biosynthesis; FAD from FMN: step 1/1. Catalyzes the transfer of the AMP portion of ATP to flavin mononucleotide (FMN) to produce flavin adenine dinucleotide (FAD) coenzyme. This is FAD synthase from Methanocaldococcus sp. (strain FS406-22).